Here is a 418-residue protein sequence, read N- to C-terminus: UDP-N-acetylglucosamine 1-carboxyvinyltransferase (418 aa).

22–23 (KN) provides a ligand contact to phosphoenolpyruvate. Residue Arg92 participates in UDP-N-acetyl-alpha-D-glucosamine binding. Catalysis depends on Cys116, which acts as the Proton donor. At Cys116 the chain carries 2-(S-cysteinyl)pyruvic acid O-phosphothioketal. Residues 121-125 (RPVDL), Asp305, and Ile327 contribute to the UDP-N-acetyl-alpha-D-glucosamine site.

Belongs to the EPSP synthase family. MurA subfamily.

The protein localises to the cytoplasm. It catalyses the reaction phosphoenolpyruvate + UDP-N-acetyl-alpha-D-glucosamine = UDP-N-acetyl-3-O-(1-carboxyvinyl)-alpha-D-glucosamine + phosphate. Its pathway is cell wall biogenesis; peptidoglycan biosynthesis. Cell wall formation. Adds enolpyruvyl to UDP-N-acetylglucosamine. The polypeptide is UDP-N-acetylglucosamine 1-carboxyvinyltransferase (Acidiphilium cryptum (strain JF-5)).